The sequence spans 1320 residues: Protein brunelleschi (1320 aa).

The segment at 313–411 (HRNSSLQEAG…IPGHQRNGDL (99 aa)) is disordered. A compositionally biased stretch (polar residues) spans 314–327 (RNSSLQEAGTSPLK). A Phosphoserine modification is found at Ser317. Position 329 is a phosphothreonine (Thr329). Basic and acidic residues predominate over residues 329-340 (TPEKWRASDATK). A compositionally biased stretch (polar residues) spans 345 to 361 (SDATANNVDSNQPQQRV). Residues 362–400 (TSNSSSCSSVSSLVTTATNSSASDTPTTSSSSTSTISAA) show a composition bias toward low complexity. Phosphoserine is present on Ser672. Residues 923–954 (VSTSGHASLPSRVGSPHHRRNEPQNSSFRSTI) form a disordered region. Positions 945-954 (PQNSSFRSTI) are enriched in polar residues.

The protein belongs to the NIBP family. As to quaternary structure, may be part of the multisubunit TRAPP (transport protein particle) complex.

It localises to the cytoplasm. It is found in the golgi apparatus. Its function is as follows. Cooperates with Rab11 and fwd/PI4K to mediate the flow of membrane through the Golgi, which is required to support cleavage furrow ingression, therefore promoting cytokinesis in male meiotic cells. The chain is Protein brunelleschi from Drosophila melanogaster (Fruit fly).